Here is a 581-residue protein sequence, read N- to C-terminus: Netrin-3 (581 aa).

Positions 1 to 15 (LRLLLTTSVLRLARA) are cleaved as a signal peptide. Residues 35 to 261 (APRRCIPEFV…SVGELQVGGR (227 aa)) enclose the Laminin N-terminal domain. N-linked (GlcNAc...) asparagine glycosylation is found at N88 and N103. 15 cysteine pairs are disulfide-bonded: C91-C124, C262-C271, C264-C281, C283-C292, C295-C315, C318-C327, C320-C345, C348-C357, C360-C378, C381-C393, C383-C400, C402-C411, C414-C428, C449-C521, and C468-C578. 3 consecutive Laminin EGF-like domains span residues 262–317 (CKCN…ECLA), 318–380 (CNCN…ACKA), and 381–430 (CDCH…PCIK). N394 carries an N-linked (GlcNAc...) asparagine glycan. Residues 449–578 (CDSYCKPAKG…LQRREKKGKC (130 aa)) form the NTR domain. The Cell attachment site signature appears at 507–509 (RGD). A glycan (N-linked (GlcNAc...) asparagine) is linked at N540.

It is found in the secreted. The protein localises to the extracellular space. It localises to the extracellular matrix. Netrins control guidance of CNS commissural axons and peripheral motor axons. In Gallus gallus (Chicken), this protein is Netrin-3 (NTN3).